The chain runs to 530 residues: Phosphoenolpyruvate carboxykinase (ATP) 2 (530 aa).

3 residues coordinate substrate: R54, Y191, and K197. ATP is bound by residues K197, H216, and 232–240; that span reads GLSGTGKTT. 2 residues coordinate Mn(2+): K197 and H216. D253 lines the Mn(2+) pocket. Residues E281, R318, 437 to 438, and T443 each bind ATP; that span reads RV. R318 contacts substrate.

The protein belongs to the phosphoenolpyruvate carboxykinase (ATP) family. It depends on Mn(2+) as a cofactor.

It is found in the cytoplasm. It carries out the reaction oxaloacetate + ATP = phosphoenolpyruvate + ADP + CO2. Its pathway is carbohydrate biosynthesis; gluconeogenesis. Functionally, involved in the gluconeogenesis. Catalyzes the conversion of oxaloacetate (OAA) to phosphoenolpyruvate (PEP) through direct phosphoryl transfer between the nucleoside triphosphate and OAA. The sequence is that of Phosphoenolpyruvate carboxykinase (ATP) 2 from Salinibacter ruber (strain DSM 13855 / M31).